The primary structure comprises 524 residues: Probable cytochrome P450 12c1, mitochondrial (524 aa).

Heme is bound at residue Cys470.

Belongs to the cytochrome P450 family. The cofactor is heme.

The protein resides in the mitochondrion membrane. The protein is Probable cytochrome P450 12c1, mitochondrial (Cyp12c1) of Drosophila melanogaster (Fruit fly).